The following is a 331-amino-acid chain: UPF0194 membrane protein YbhG (331 aa).

An N-terminal signal peptide occupies residues 1–15; that stretch reads MKKPVVIGLAVVVLA. The stretch at 107 to 208 forms a coiled coil; it reads EEIAQAAAAV…LNLQDSTLIA (102 aa).

The protein belongs to the UPF0194 family.

Its subcellular location is the periplasm. The polypeptide is UPF0194 membrane protein YbhG (Escherichia coli O157:H7 (strain EC4115 / EHEC)).